Consider the following 279-residue polypeptide: Diaminopimelate epimerase (279 aa).

3 residues coordinate substrate: Asn-12, Gln-45, and Asn-65. Cys-74 serves as the catalytic Proton donor. Substrate-binding positions include 75–76 (GN), Asn-162, Asn-195, and 213–214 (ER). Cys-222 acts as the Proton acceptor in catalysis. 223–224 (GS) contributes to the substrate binding site.

Belongs to the diaminopimelate epimerase family. Homodimer.

The protein localises to the cytoplasm. The catalysed reaction is (2S,6S)-2,6-diaminopimelate = meso-2,6-diaminopimelate. Its pathway is amino-acid biosynthesis; L-lysine biosynthesis via DAP pathway; DL-2,6-diaminopimelate from LL-2,6-diaminopimelate: step 1/1. In terms of biological role, catalyzes the stereoinversion of LL-2,6-diaminopimelate (L,L-DAP) to meso-diaminopimelate (meso-DAP), a precursor of L-lysine and an essential component of the bacterial peptidoglycan. The protein is Diaminopimelate epimerase of Shewanella loihica (strain ATCC BAA-1088 / PV-4).